We begin with the raw amino-acid sequence, 467 residues long: Tel2-interacting protein 2 (467 aa).

A coiled-coil region spans residues 4-45 (YKELARRLHTLQSKNEKEALEKQIDFLDKLVVEVDSLVHEQD).

It belongs to the TTI2 family. Component of the TTT complex composed of tel2, tti1 and tti2. Interacts with tel2 and ttiI1. Component of the ASTRA complex composed of at least rvb1, rvb2, tra1, tel2, tti1 and tti2.

The protein resides in the nucleus. In terms of biological role, component of the tel2-tti1-tti2 (TTT) complex that stabilizes protein levels of the phosphatidylinositol 3-kinase-related protein kinase (PIKK) family proteins. The TTT complex is involved in the cellular resistance to DNA damage stresses, like ionizing radiation (IR), ultraviolet (UV) and mitomycin C (MMC). Component of the ASTRA complex involved in chromatin remodeling. The chain is Tel2-interacting protein 2 from Schizosaccharomyces pombe (strain 972 / ATCC 24843) (Fission yeast).